The chain runs to 64 residues: DNA gyrase inhibitor YacG (64 aa).

4 residues coordinate Zn(2+): cysteine 7, cysteine 10, cysteine 26, and cysteine 30. The tract at residues 43–64 (KRIPGPINPDLLPYPDEGEQWQ) is disordered.

This sequence belongs to the DNA gyrase inhibitor YacG family. In terms of assembly, interacts with GyrB. Zn(2+) serves as cofactor.

In terms of biological role, inhibits all the catalytic activities of DNA gyrase by preventing its interaction with DNA. Acts by binding directly to the C-terminal domain of GyrB, which probably disrupts DNA binding by the gyrase. This is DNA gyrase inhibitor YacG from Aeromonas salmonicida (strain A449).